A 434-amino-acid polypeptide reads, in one-letter code: Ribitol-5-phosphate xylosyltransferase 1 (434 aa).

Residues 1–7 (MRFFRRK) are Cytoplasmic-facing. Residues 8-28 (IAIIVILAYAIFSLYAAYNVF) form a helical; Signal-anchor for type II membrane protein membrane-spanning segment. Topologically, residues 29–434 (FSKRVISRVH…VLEENFFKIT (406 aa)) are extracellular.

Belongs to the TMEM5 family.

The protein resides in the golgi apparatus membrane. The catalysed reaction is 3-O-[Rib-ol-P-Rib-ol-P-3-beta-D-GalNAc-(1-&gt;3)-beta-D-GlcNAc-(1-&gt;4)-(O-6-P-alpha-D-Man)]-Thr-[protein] + UDP-alpha-D-xylose = 3-O-[beta-D-Xyl-(1-&gt;4)-Rib-ol-P-Rib-ol-P-3-beta-D-GalNAc-(1-&gt;3)-beta-D-GlcNAc-(1-&gt;4)-(O-6-P-alpha-D-Man)]-Thr-[protein] + UDP + H(+). It functions in the pathway protein modification; protein glycosylation. Acts as a UDP-D-xylose:ribitol-5-phosphate beta1,4-xylosyltransferase, which catalyzes the transfer of UDP-D-xylose to ribitol 5-phosphate (Rbo5P) to form the Xylbeta1-4Rbo5P linkage on O-mannosyl glycan. Participates in the biosynthesis of the phosphorylated O-mannosyl trisaccharide (N-acetylgalactosamine-beta-3-N-acetylglucosamine-beta-4-(phosphate-6-)mannose), a carbohydrate structure present in alpha-dystroglycan (DAG1), which is required for binding laminin G-like domain-containing extracellular proteins with high affinity. This is Ribitol-5-phosphate xylosyltransferase 1 (rxylt1) from Danio rerio (Zebrafish).